We begin with the raw amino-acid sequence, 122 residues long: Biogenesis of lysosome-related organelles complex 1 subunit CNL1 (122 aa).

Over residues Met1–Glu10 the composition is skewed to basic and acidic residues. The segment at Met1 to Ile21 is disordered. A coiled-coil region spans residues Glu63–Ile95.

It belongs to the BLOC1S4 family. In terms of assembly, component of the biogenesis of lysosome-related organelles complex-1 (BLOC-1) composed of at least BLI1, BLS1, CNL1, KXD1, SNN1 and VAB2.

The protein resides in the cytoplasm. Its function is as follows. Component of the biogenesis of lysosome-related organelles complex-1 (BLOC-1), a complex that is involved in endosomal cargo sorting. The polypeptide is Biogenesis of lysosome-related organelles complex 1 subunit CNL1 (CLN1) (Saccharomyces cerevisiae (strain Lalvin QA23) (Baker's yeast)).